A 275-amino-acid chain; its full sequence is Replication protein A 32 kDa subunit (275 aa).

The disordered stretch occupies residues 23–47 (MQSPGGFGSPAPTQGEKKSRSRSQQ). The segment at residues 76–150 (VTIVGIVRHA…KSVVAFKIAP (75 aa)) is a DNA-binding region (OB).

Belongs to the replication factor A protein 2 family. As to quaternary structure, component of the replication protein A complex (RPA/RP-A), a heterotrimeric complex composed of RPA1, RPA2 and RPA3. Post-translationally, differentially phosphorylated throughout the cell cycle, becoming phosphorylated at the G1-S transition and dephosphorylated in late mitosis. Phosphorylation increases upon replication fork stalling.

It localises to the nucleus. Its subcellular location is the PML body. Functionally, as part of the heterotrimeric replication protein A complex (RPA/RP-A), binds and stabilizes single-stranded DNA intermediates, that form during DNA replication or upon DNA stress. It prevents their reannealing and in parallel, recruits and activates different proteins and complexes involved in DNA metabolism. Thereby, it plays an essential role both in DNA replication and the cellular response to DNA damage. This chain is Replication protein A 32 kDa subunit (rpa2), found in Xenopus tropicalis (Western clawed frog).